A 271-amino-acid polypeptide reads, in one-letter code: Protein phosphatase 1 regulatory subunit 3B-B (271 aa).

The short motif at 56-59 (RVSF) is the PP1-binding motif element. The CBM21 domain maps to 119–227 (RNRLKADSVC…SNKGLNYRIV (109 aa)).

Interacts with glycogen, PPP1CC catalytic subunit of PP1 and PYGL. Associates with glycogen particles. Forms complexes with debranching enzyme, glycogen phosphorylase, glycogen synthase and phosphorylase kinase which is necessary for its regulation of PP1 activity.

In terms of biological role, acts as a glycogen-targeting subunit for phosphatase PP1. Facilitates interaction of the PP1 with enzymes of the glycogen metabolism and regulates its activity. Suppresses the rate at which PP1 dephosphorylates (inactivates) glycogen phosphorylase and enhances the rate at which it activates glycogen synthase and therefore limits glycogen breakdown. This Xenopus laevis (African clawed frog) protein is Protein phosphatase 1 regulatory subunit 3B-B (ppp1r3b-b).